Reading from the N-terminus, the 394-residue chain is Elongation factor Tu (394 aa).

The tr-type G domain maps to 10–204 (KEHVNVGTIG…AVDTYIENPV (195 aa)). Positions 19–26 (GHVDHGKT) are G1. A GTP-binding site is contributed by 19 to 26 (GHVDHGKT). Threonine 26 provides a ligand contact to Mg(2+). The interval 60 to 64 (GITIN) is G2. The tract at residues 81–84 (DCPG) is G3. GTP-binding positions include 81–85 (DCPGH) and 136–139 (NKCD). The tract at residues 136–139 (NKCD) is G4. Positions 174–176 (SAL) are G5.

This sequence belongs to the TRAFAC class translation factor GTPase superfamily. Classic translation factor GTPase family. EF-Tu/EF-1A subfamily. In terms of assembly, monomer.

The protein localises to the cytoplasm. It carries out the reaction GTP + H2O = GDP + phosphate + H(+). Functionally, GTP hydrolase that promotes the GTP-dependent binding of aminoacyl-tRNA to the A-site of ribosomes during protein biosynthesis. The chain is Elongation factor Tu from Mycoplasmopsis synoviae (strain 53) (Mycoplasma synoviae).